Reading from the N-terminus, the 450-residue chain is MSTHVTFDYSKALSFIGEHEITYLRDAVKVTHHAIHEKTGAGNDFLGWVDLPLQYDKEEFARIQKCAEKIKNDSDILLVVGIGGSYLGARAAIEMLNHSFYNTLSKEQRKTPQVLFVGQNISSTYMKDLMDVLEGKDFSINVISKSGTTTEPALAFRIFRKLLEEKYGKEEARKRIYATTDKARGALKTLADNEGYETFVIPDDVGGRFSVLTPVGLLPIAVSGLNIEEMMKGAAAGREDFGTSELEENPAYQYAVVRNALYNKGKTIEMLVNYEPALQYFAEWWKQLFGESEGKDQKGIFPSSANFSTDLHSLGQYVQEGRRDLFETVLKVGKPTHELTIESEENDLDGLNYLAGETVDFVNTKAYEGTLLAHSDGGVPNLIVNIPELNEYTFGYLVYFFEKACAMSGYLLGVNPFDQPGVEAYKKNMFALLGKPGFEELKAELEERLK.

Position 39 is a phosphothreonine (threonine 39). Catalysis depends on glutamate 291, which acts as the Proton donor. Active-site residues include histidine 312 and lysine 426.

The protein belongs to the GPI family.

The protein localises to the cytoplasm. The catalysed reaction is alpha-D-glucose 6-phosphate = beta-D-fructose 6-phosphate. It participates in carbohydrate biosynthesis; gluconeogenesis. It functions in the pathway carbohydrate degradation; glycolysis; D-glyceraldehyde 3-phosphate and glycerone phosphate from D-glucose: step 2/4. Catalyzes the reversible isomerization of glucose-6-phosphate to fructose-6-phosphate. This chain is Glucose-6-phosphate isomerase, found in Bacillus cereus (strain AH187).